The following is a 200-amino-acid chain: Glycerol-3-phosphate acyltransferase (200 aa).

A run of 5 helical transmembrane segments spans residues 2–22 (IHLL…AVIV), 51–71 (TAAI…VVAA), 84–104 (IVLL…FFGF), 113–133 (ALGI…ATWV), and 143–163 (SLSA…LLGW).

Belongs to the PlsY family. Probably interacts with PlsX.

It localises to the cell inner membrane. It catalyses the reaction an acyl phosphate + sn-glycerol 3-phosphate = a 1-acyl-sn-glycero-3-phosphate + phosphate. The protein operates within lipid metabolism; phospholipid metabolism. In terms of biological role, catalyzes the transfer of an acyl group from acyl-phosphate (acyl-PO(4)) to glycerol-3-phosphate (G3P) to form lysophosphatidic acid (LPA). This enzyme utilizes acyl-phosphate as fatty acyl donor, but not acyl-CoA or acyl-ACP. This Thiobacillus denitrificans (strain ATCC 25259 / T1) protein is Glycerol-3-phosphate acyltransferase.